The chain runs to 1594 residues: RB1-inducible coiled-coil protein 1 (1594 aa).

Ser222, Ser229, and Ser237 each carry phosphoserine. The residue at position 238 (Thr238) is a Phosphothreonine. 5 positions are modified to phosphoserine: Ser243, Ser253, Ser257, Ser261, and Ser266. A Nuclear localization signal motif is present at residues 566-569 (KPRK). Phosphoserine occurs at positions 624, 647, 650, 652, 653, 734, 1091, 1222, 1370, and 1484. The tract at residues 638 to 673 (EQKASVSQTSPQSASSPRMESTAGITTTTSPRTPPP) is disordered. Positions 641–654 (ASVSQTSPQSASSP) are enriched in low complexity. The FFAT motif lies at 731–737 (DFMSAVN). Coiled coils occupy residues 859-1397 (LKEK…SSSF) and 1438-1485 (METS…SQSM).

This sequence belongs to the ATG17 family. Part of a complex consisting of ATG13/KIAA0652, ULK1 and RB1CC1. This complex associates with ATG101. Interacts with PTK2/FAK1 and PTK2B/PYK2. Interacts with GABARAP and GABARAPL1. Interacts with ATG16L1; the interaction is required for ULK1 complex-dependent autophagy. Interacts with RNF111, SKI and SMAD7. Interacts with COP1 in the cytoplasm of proliferating cells in response to UV stimulation. Interacts with TP53. Interacts with C9orf72. Interacts with WDR45B. Interacts with ATG13; this interaction is increased in the absence of TMEM39A. Interacts with WIPI2. Interacts with TAX1BP1. Interacts (via phosphorylated FFAT motif) with MOSPD2, VAPA and VAPB. Post-translationally, phosphorylation at Ser-734 of the FFAT motif activates interaction with MOSPD2, VAPA and VAPB. As to expression, expression levels correlated closely with those of RB1 in cancer cell lines as well as in various normal human tissues. Abundantly expressed in human musculoskeletal and cultured osteosarcoma cells.

It localises to the nucleus. The protein resides in the cytoplasm. Its subcellular location is the cytosol. The protein localises to the preautophagosomal structure. It is found in the lysosome. Involved in autophagy. Regulates early events but also late events of autophagosome formation through direct interaction with Atg16L1. Required for the formation of the autophagosome-like double-membrane structure that surrounds the Salmonella-containing vacuole (SCV) during S.typhimurium infection and subsequent xenophagy. Involved in repair of DNA damage caused by ionizing radiation, which subsequently improves cell survival by decreasing apoptosis. Inhibits PTK2/FAK1 and PTK2B/PYK2 kinase activity, affecting their downstream signaling pathways. Plays a role as a modulator of TGF-beta-signaling by restricting substrate specificity of RNF111. Functions as a DNA-binding transcription factor. Is a potent regulator of the RB1 pathway through induction of RB1 expression. Plays a crucial role in muscular differentiation. Plays an indispensable role in fetal hematopoiesis and in the regulation of neuronal homeostasis. The polypeptide is RB1-inducible coiled-coil protein 1 (Homo sapiens (Human)).